The sequence spans 469 residues: 3-isopropylmalate dehydratase large subunit (469 aa).

Cysteine 347, cysteine 410, and cysteine 413 together coordinate [4Fe-4S] cluster.

It belongs to the aconitase/IPM isomerase family. LeuC type 1 subfamily. As to quaternary structure, heterodimer of LeuC and LeuD. Requires [4Fe-4S] cluster as cofactor.

The catalysed reaction is (2R,3S)-3-isopropylmalate = (2S)-2-isopropylmalate. It participates in amino-acid biosynthesis; L-leucine biosynthesis; L-leucine from 3-methyl-2-oxobutanoate: step 2/4. Functionally, catalyzes the isomerization between 2-isopropylmalate and 3-isopropylmalate, via the formation of 2-isopropylmaleate. This is 3-isopropylmalate dehydratase large subunit from Burkholderia pseudomallei (strain 1106a).